A 474-amino-acid chain; its full sequence is 6-phospho-beta-galactosidase (474 aa).

5 residues coordinate D-galactose 6-phosphate: Gln18, His115, Asn159, Glu160, and Asn296. The active-site Proton donor is the Glu160. Glu374 acts as the Nucleophile in catalysis. Residues Ser427, Trp428, Lys434, and Tyr436 each contribute to the D-galactose 6-phosphate site.

This sequence belongs to the glycosyl hydrolase 1 family.

It carries out the reaction a 6-phospho-beta-D-galactoside + H2O = D-galactose 6-phosphate + an alcohol. The protein operates within carbohydrate metabolism; lactose degradation; D-galactose 6-phosphate and beta-D-glucose from lactose 6-phosphate: step 1/1. This Clostridium acetobutylicum (strain ATCC 824 / DSM 792 / JCM 1419 / IAM 19013 / LMG 5710 / NBRC 13948 / NRRL B-527 / VKM B-1787 / 2291 / W) protein is 6-phospho-beta-galactosidase.